An 807-amino-acid polypeptide reads, in one-letter code: Carbamoyltransferase HypF2 (807 aa).

The region spanning 14-101 (RIRIRVRGVV…VDADGFAILE (88 aa)) is the Acylphosphatase-like domain. C4-type zinc fingers lie at residues 120-145 (CPDC…CTQC) and 170-195 (CRPC…CPDC). Residues 212–415 (VDPIAETVAR…HVQFIRRARG (204 aa)) form the YrdC-like domain. Positions 663-682 (WGEQPSPGRPKTVAHSLGGV) are disordered.

The protein belongs to the carbamoyltransferase HypF family.

The enzyme catalyses C-terminal L-cysteinyl-[HypE protein] + carbamoyl phosphate + ATP + H2O = C-terminal S-carboxamide-L-cysteinyl-[HypE protein] + AMP + phosphate + diphosphate + H(+). Its pathway is protein modification; [NiFe] hydrogenase maturation. Involved in the maturation of [NiFe] hydrogenases. Along with HypE, it catalyzes the synthesis of the CN ligands of the active site iron of [NiFe]-hydrogenases. HypF functions as a carbamoyl transferase using carbamoylphosphate as a substrate and transferring the carboxamido moiety in an ATP-dependent reaction to the thiolate of the C-terminal cysteine of HypE yielding a protein-S-carboxamide. This chain is Carbamoyltransferase HypF2 (hypF2), found in Cupriavidus necator (strain ATCC 17699 / DSM 428 / KCTC 22496 / NCIMB 10442 / H16 / Stanier 337) (Ralstonia eutropha).